Here is a 38-residue protein sequence, read N- to C-terminus: MQVNDLGFVASILFVLVPSVFLIILYIQTASREGKKDS.

The helical transmembrane segment at 7–27 (GFVASILFVLVPSVFLIILYI) threads the bilayer.

This sequence belongs to the PsbM family. In terms of assembly, PSII is composed of 1 copy each of membrane proteins PsbA, PsbB, PsbC, PsbD, PsbE, PsbF, PsbH, PsbI, PsbJ, PsbK, PsbL, PsbM, PsbT, PsbX, PsbY, PsbZ, Psb30/Ycf12, peripheral proteins PsbO, CyanoQ (PsbQ), PsbU, PsbV and a large number of cofactors. It forms dimeric complexes.

It localises to the cellular thylakoid membrane. Functionally, one of the components of the core complex of photosystem II (PSII). PSII is a light-driven water:plastoquinone oxidoreductase that uses light energy to abstract electrons from H(2)O, generating O(2) and a proton gradient subsequently used for ATP formation. It consists of a core antenna complex that captures photons, and an electron transfer chain that converts photonic excitation into a charge separation. This subunit is found at the monomer-monomer interface. In Nostoc sp. (strain PCC 7120 / SAG 25.82 / UTEX 2576), this protein is Photosystem II reaction center protein M.